The chain runs to 132 residues: Small ribosomal subunit protein eS12 (132 aa).

N-acetylalanine is present on alanine 2. Lysine 129 is subject to N6-succinyllysine.

The protein belongs to the eukaryotic ribosomal protein eS12 family. As to quaternary structure, part of the small subunit (SSU) processome, composed of more than 70 proteins and the RNA chaperone small nucleolar RNA (snoRNA) U3. Subunit of the 40S ribosomal complex.

The protein localises to the nucleus. It is found in the nucleolus. Its function is as follows. Part of the small subunit (SSU) processome, first precursor of the small eukaryotic ribosomal subunit. During the assembly of the SSU processome in the nucleolus, many ribosome biogenesis factors, an RNA chaperone and ribosomal proteins associate with the nascent pre-rRNA and work in concert to generate RNA folding, modifications, rearrangements and cleavage as well as targeted degradation of pre-ribosomal RNA by the RNA exosome. Subunit of the 40S ribosomal complex. The sequence is that of Small ribosomal subunit protein eS12 (Rps12) from Rattus norvegicus (Rat).